The sequence spans 1005 residues: Negative regulator of pleiotropic drug resistance STB5 (1005 aa).

The segment at 1–28 is disordered; sequence MSGPDKGSDSGQTANDPKQKKARNGQME. The segment at residues 32–59 is a DNA-binding region (zn(2)-C6 fungal-type); sequence CARCRKLKKKCPRQLPECSNCLKAREPC. Disordered regions lie at residues 129 to 151, 666 to 693, and 763 to 831; these read GGEQ…SINR, KGKS…EDVK, and TKPT…SSLR. The segment covering 673 to 693 has biased composition (basic and acidic residues); it reads KRFEKSKESDSDRGVTEEDVK. The span at 763–773 shows a compositional bias: polar residues; that stretch reads TKPTANIMNDQ. Over residues 792-801 the composition is skewed to basic and acidic residues; the sequence is EGPKSLKEGN.

Its subcellular location is the nucleus. Functionally, transcription factor that negatively regulates pleiotropic drug resistance genes, including the ABC transporter genes CDR1, PDH1, and YOR1. The polypeptide is Negative regulator of pleiotropic drug resistance STB5 (Candida glabrata (strain ATCC 2001 / BCRC 20586 / JCM 3761 / NBRC 0622 / NRRL Y-65 / CBS 138) (Yeast)).